Consider the following 230-residue polypeptide: Orotidine 5'-phosphate decarboxylase (230 aa).

Residues Asp11, Lys34, 61–70, Thr117, Arg179, Gln188, Gly208, and Arg209 contribute to the substrate site; that span reads DLKLHDIPNT. Lys63 functions as the Proton donor in the catalytic mechanism.

It belongs to the OMP decarboxylase family. Type 1 subfamily. In terms of assembly, homodimer.

The enzyme catalyses orotidine 5'-phosphate + H(+) = UMP + CO2. It participates in pyrimidine metabolism; UMP biosynthesis via de novo pathway; UMP from orotate: step 2/2. Its function is as follows. Catalyzes the decarboxylation of orotidine 5'-monophosphate (OMP) to uridine 5'-monophosphate (UMP). This Streptococcus gordonii (strain Challis / ATCC 35105 / BCRC 15272 / CH1 / DL1 / V288) protein is Orotidine 5'-phosphate decarboxylase.